Consider the following 247-residue polypeptide: Adenosylcobinamide-GDP ribazoletransferase (247 aa).

5 helical membrane-spanning segments follow: residues 34 to 54, 59 to 79, 113 to 133, 138 to 158, and 194 to 214; these read IITFPLIGLLLGAISGLVFMV, CGVPLAALFSVLVLALMTGGF, GGLALIFVVLAKILVLSELAL, ILALLAAACAVSRGTAALLMY, and VLLPGMHGVAAMVVTMVAIFI.

The protein belongs to the CobS family. Mg(2+) serves as cofactor.

Its subcellular location is the cell inner membrane. The enzyme catalyses alpha-ribazole + adenosylcob(III)inamide-GDP = adenosylcob(III)alamin + GMP + H(+). The catalysed reaction is alpha-ribazole 5'-phosphate + adenosylcob(III)inamide-GDP = adenosylcob(III)alamin 5'-phosphate + GMP + H(+). It participates in cofactor biosynthesis; adenosylcobalamin biosynthesis; adenosylcobalamin from cob(II)yrinate a,c-diamide: step 7/7. Its function is as follows. Joins adenosylcobinamide-GDP and alpha-ribazole to generate adenosylcobalamin (Ado-cobalamin). Also synthesizes adenosylcobalamin 5'-phosphate from adenosylcobinamide-GDP and alpha-ribazole 5'-phosphate. The polypeptide is Adenosylcobinamide-GDP ribazoletransferase (Shigella boydii serotype 4 (strain Sb227)).